A 394-amino-acid polypeptide reads, in one-letter code: MSLGTSEQSEIREIVAGSAPARFARGWHCLGLAKDFKDGKPHSVHAFGTKLVVWADSNDEIRILDAYCRHMGGDLSQGTVKGDEIACPFHDWRWGGNGRCKNIPYARRVPPIAKTRAWHTLDQDGLLFVWHDPQGNPPPADVTIPRIAGATSDEWTDWVWYTTEVDTNCREIIDNIVDMAHFFYVHYSFPVYFKNVFEGHVASQFMRGQAREDTRPHANGQPKMIGSRSDASYFGPSFMIDDLVYEYEGYDVESVLINCHYPVSQDKFVLMYGMIVKKSDRLEGEKALQTAQQFGNFIAKGFEQDIEIWRNKTRIDNPLLCEEDGPVYQLRRWYEQFYVDVEDVAPEMTDRFEFEMDTTRPVAAWMKEVEANIARKAALDTETRSAPEQSTTAG.

Residues 27–129 (WHCLGLAKDF…TLDQDGLLFV (103 aa)) enclose the Rieske domain. Positions 68, 70, 87, and 90 each coordinate [2Fe-2S] cluster. Fe cation contacts are provided by N175, H181, and H186. Position 245 (Y245) interacts with substrate. A Fe cation-binding site is contributed by D305.

In terms of assembly, homotrimer. The two-component system 3-ketosteroid-9-alpha-monooxygenase is composed of an oxygenase component KshA and a reductase component KshB. It depends on [2Fe-2S] cluster as a cofactor. Requires Fe cation as cofactor.

The catalysed reaction is androsta-1,4-diene-3,17-dione + 2 reduced [2Fe-2S]-[ferredoxin] + O2 + 2 H(+) = 9alpha-hydroxyandrosta-1,4-diene-3,17-dione + 2 oxidized [2Fe-2S]-[ferredoxin] + H2O. Its function is as follows. May be involved in the degradation of cholic acid, a steroid acid found predominantly in the bile. In vitro, catalyzes the introduction of a 9alpha-hydroxyl moiety into the ring B of 3-ketosteroid substrates such as 1,4-androstadiene-3,17-dione (ADD), 4-androstene-3,17-dione (AD), 4-androstene-17beta-ol-3-one (testosterone), 4-pregnene-3,20-dione (progesterone), 3-oxo-23,24-bisnorcholesta-4-en-22-oate (4-BNC), 23,24-bisnorcholesta-4-ene-22-oate, 3-oxo-23,24-bisnorcholaesta-1,4-dien-22-oate (1,4-BNC), 23,24-bisnorcholesta-1,4-diene-22-oate and 3-oxo-23,24-bisnorcholesta-1,4-dien-22-oyl-coenzyme A thioester (1,4-BNC-CoA). KshA1 has the highest specificity for steroids possessing an isopropionyl side chain at C17. This Rhodococcus rhodochrous protein is 3-ketosteroid-9-alpha-monooxygenase, oxygenase component.